Reading from the N-terminus, the 162-residue chain is CD-NTase-associated protein 7 (162 aa).

The disordered stretch occupies residues 138–162; that stretch reads HSGLTQSGGREYSSNGYGMQRKDYN. Polar residues predominate over residues 139-154; sequence SGLTQSGGREYSSNGY.

This sequence belongs to the HORMA family. HORMA1 subfamily. In terms of assembly, forms complexes with CdnC with 1:1 and 2:2 stoichimetry, and a 1:1:6 CdnC:Cap7:Cap6 complex.

In terms of biological role, sensor protein of a CBASS antivirus system. CBASS (cyclic oligonucleotide-based antiphage signaling system) provides immunity against bacteriophage. The CD-NTase protein synthesizes cyclic nucleotides in response to infection; these serve as specific second messenger signals. The signals activate a diverse range of effectors, leading to bacterial cell death and thus abortive phage infection. A type III CBASS system. Expression of this CBASS system (Cap18-Cap6-Cap7-CdnC-CapW-Cap17) in a susceptible E.coli (strain MG1655) confers resistance to bacteriophage P1. The sensor protein for this CBASS system. Binds to a closure peptide, which allows it to activate CdnC for second messenger synthesis. The chain is CD-NTase-associated protein 7 from Escherichia coli (strain KTE188).